The sequence spans 255 residues: F-box/SPRY domain-containing protein 1 (255 aa).

The F-box domain maps to 3 to 51 (DPVAALCNYNVLEVIFSYLELDDLSHCSQVCKSWNLFLNDENSDVWRWH). Residues 61 to 253 (LKSDLLSSVS…VSMVYLGTPM (193 aa)) form the B30.2/SPRY domain.

This sequence belongs to the FBXO45/Fsn family. In terms of assembly, component of an E3 ubiquitin ligase complex composed of hiw and Fsn.

The protein localises to the synapse. The protein operates within protein modification; protein ubiquitination. Its function is as follows. Required in the presynaptic motoneuron to down-regulate the levels of wnd and restrain synaptic terminal growth at the neuromuscular junction (NMJ). This is F-box/SPRY domain-containing protein 1 from Drosophila ananassae (Fruit fly).